The sequence spans 338 residues: Eukaryotic translation initiation factor 3 subunit H (338 aa).

The MPN domain maps to 22–154 (VQCDGLAVMK…LKAYRLTPQA (133 aa)).

It belongs to the eIF-3 subunit H family. In terms of assembly, component of the eukaryotic translation initiation factor 3 (eIF-3) complex. The eIF-3 complex interacts with pix. Interacts with mxt.

The protein resides in the cytoplasm. In terms of biological role, component of the eukaryotic translation initiation factor 3 (eIF-3) complex, which is involved in protein synthesis of a specialized repertoire of mRNAs and, together with other initiation factors, stimulates binding of mRNA and methionyl-tRNAi to the 40S ribosome. The eIF-3 complex specifically targets and initiates translation of a subset of mRNAs involved in cell proliferation. The chain is Eukaryotic translation initiation factor 3 subunit H from Drosophila melanogaster (Fruit fly).